The sequence spans 214 residues: Probable nicotinate-nucleotide adenylyltransferase (214 aa).

The protein belongs to the NadD family.

It catalyses the reaction nicotinate beta-D-ribonucleotide + ATP + H(+) = deamido-NAD(+) + diphosphate. It functions in the pathway cofactor biosynthesis; NAD(+) biosynthesis; deamido-NAD(+) from nicotinate D-ribonucleotide: step 1/1. Functionally, catalyzes the reversible adenylation of nicotinate mononucleotide (NaMN) to nicotinic acid adenine dinucleotide (NaAD). The sequence is that of Probable nicotinate-nucleotide adenylyltransferase from Psychromonas ingrahamii (strain DSM 17664 / CCUG 51855 / 37).